We begin with the raw amino-acid sequence, 317 residues long: tRNA-cytidine(32) 2-sulfurtransferase (317 aa).

Positions 63–68 match the PP-loop motif motif; it reads SGGKDS. Residues Cys-138, Cys-141, and Cys-229 each contribute to the [4Fe-4S] cluster site.

This sequence belongs to the TtcA family. As to quaternary structure, homodimer. It depends on Mg(2+) as a cofactor. [4Fe-4S] cluster is required as a cofactor.

Its subcellular location is the cytoplasm. The catalysed reaction is cytidine(32) in tRNA + S-sulfanyl-L-cysteinyl-[cysteine desulfurase] + AH2 + ATP = 2-thiocytidine(32) in tRNA + L-cysteinyl-[cysteine desulfurase] + A + AMP + diphosphate + H(+). It functions in the pathway tRNA modification. Functionally, catalyzes the ATP-dependent 2-thiolation of cytidine in position 32 of tRNA, to form 2-thiocytidine (s(2)C32). The sulfur atoms are provided by the cysteine/cysteine desulfurase (IscS) system. This is tRNA-cytidine(32) 2-sulfurtransferase from Janthinobacterium sp. (strain Marseille) (Minibacterium massiliensis).